A 468-amino-acid chain; its full sequence is MSRGTLFDKVWDLHTVATLPSGQTQLFIGLHLIHEVTSPQAFSMLRDRGLTVKFPGRTVATVDHIVPTENQARPFADSLAEEMIVTLERNCRENGIRFYNIGSGSQGIVHVIAPEQGLTQPGMTIACGDSHTSTHGAFGAIAFGIGTSQVRDVLASQTLALSKLKVRKIEVNGELQPGVYAKDVILHIIRKLGVKGGVGYAYEFAGSTFAAMSMEERMTVCNMAIEGGARCGYVNPDQITYDYLQGREFAPQGEAWDRAIAWWESLRSEADAEYDDVVVFDAAEIAPTVTWGITPGQGIGITETIPTPDSLLDEDRAVAAEAYSYMDLEPGAPLQGTKVDVCFIGSCTNGRLSDLREAAKVAQGRKVAAGIKAFVVPGSERVKQQAEAEGLDQIFTAAGFEWRQAGCSMCLAMNPDKLEGRQISASSSNRNFKGRQGSASGRTLLMSPAMVAAAAIAGEVTDVRNWLN.

The [4Fe-4S] cluster site is built by Cys-347, Cys-407, and Cys-410.

It belongs to the aconitase/IPM isomerase family. LeuC type 1 subfamily. In terms of assembly, heterodimer of LeuC and LeuD. It depends on [4Fe-4S] cluster as a cofactor.

It catalyses the reaction (2R,3S)-3-isopropylmalate = (2S)-2-isopropylmalate. Its pathway is amino-acid biosynthesis; L-leucine biosynthesis; L-leucine from 3-methyl-2-oxobutanoate: step 2/4. Its function is as follows. Catalyzes the isomerization between 2-isopropylmalate and 3-isopropylmalate, via the formation of 2-isopropylmaleate. The chain is 3-isopropylmalate dehydratase large subunit from Synechococcus elongatus (strain ATCC 33912 / PCC 7942 / FACHB-805) (Anacystis nidulans R2).